The sequence spans 652 residues: Phosphomethylpyrimidine synthase (652 aa).

Disordered stretches follow at residues 1-45 (MVSR…SVSA) and 118-166 (QRGD…LDGR). Residues 8–45 (SSSSTSKAVTSSPSTSSLSSAASSPSVSSSSSSSSVSA) are compositionally biased toward low complexity. Positions 134–162 (GASGPGTLGSGTPGSGTPGSGPLGLGGTD) are enriched in gly residues. Substrate contacts are provided by residues asparagine 245, methionine 274, tyrosine 303, histidine 339, 359–361 (SRG), 400–403 (DGLR), and glutamate 439. Position 443 (histidine 443) interacts with Zn(2+). Tyrosine 466 provides a ligand contact to substrate. Histidine 507 provides a ligand contact to Zn(2+). The [4Fe-4S] cluster site is built by cysteine 587, cysteine 590, and cysteine 595.

It belongs to the ThiC family. Requires [4Fe-4S] cluster as cofactor.

The enzyme catalyses 5-amino-1-(5-phospho-beta-D-ribosyl)imidazole + S-adenosyl-L-methionine = 4-amino-2-methyl-5-(phosphooxymethyl)pyrimidine + CO + 5'-deoxyadenosine + formate + L-methionine + 3 H(+). The protein operates within cofactor biosynthesis; thiamine diphosphate biosynthesis. Functionally, catalyzes the synthesis of the hydroxymethylpyrimidine phosphate (HMP-P) moiety of thiamine from aminoimidazole ribotide (AIR) in a radical S-adenosyl-L-methionine (SAM)-dependent reaction. The polypeptide is Phosphomethylpyrimidine synthase (Frankia casuarinae (strain DSM 45818 / CECT 9043 / HFP020203 / CcI3)).